The chain runs to 317 residues: Melanocyte-stimulating hormone receptor (317 aa).

Residues 1 to 37 (MAVQGSQRRLLGSLNSTPTAIPQLGLAANQTGARCLE) lie on the Extracellular side of the membrane. N29 carries N-linked (GlcNAc...) asparagine glycosylation. A helical membrane pass occupies residues 38-63 (VSIPDGLFLSLGLVSLVENMLVVATI). The Cytoplasmic portion of the chain corresponds to 64-72 (AKNRNLHSP). Residues 73-93 (MYCFICCLALSDLLVSGSNVL) form a helical membrane-spanning segment. Over 94–118 (ETAVILLLEAGALVARAAVLQQVDN) the chain is Extracellular. The chain crosses the membrane as a helical span at residues 119-140 (VIDVITCSSMLSSLCFLGAIAV). Residues 141 to 163 (DRYISIFYALRYHSIVTLPRARR) are Cytoplasmic-facing. A helical membrane pass occupies residues 164–183 (AIAAIWVASVLFSTLFIAYC). At 184-191 (DHTAVLLC) the chain is on the extracellular side. A helical membrane pass occupies residues 192–211 (LVVFFLAVLVLMAVLYVHML). Residues 212–240 (ARACQHAQGIARLHKRQRPVHQGFGLKGA) are Cytoplasmic-facing. Residues 241–266 (VTLTILLGIFFLCWGPFFLHLTLIVL) form a helical membrane-spanning segment. Over 267-279 (CPEHPTCGCIFKN) the chain is Extracellular. The helical transmembrane segment at 280–300 (FNLFLALIICNAIIDPLIYAF) threads the bilayer. Topologically, residues 301–317 (HSQELRRTLKEVLTCSW) are cytoplasmic. C315 is lipidated: S-palmitoyl cysteine.

The protein belongs to the G-protein coupled receptor 1 family. Interacts with MGRN1, but does not undergo MGRN1-mediated ubiquitination; this interaction competes with GNAS-binding and thus inhibits agonist-induced cAMP production. Interacts with OPN3; the interaction results in a decrease in MC1R-mediated cAMP signaling and ultimately a decrease in melanin production in melanocytes.

The protein resides in the cell membrane. Functionally, receptor for MSH (alpha, beta and gamma) and ACTH. The activity of this receptor is mediated by G proteins which activate adenylate cyclase. Mediates melanogenesis, the production of eumelanin (black/brown) and phaeomelanin (red/yellow), via regulation of cAMP signaling in melanocytes. The sequence is that of Melanocyte-stimulating hormone receptor (MC1R) from Pan troglodytes (Chimpanzee).